Reading from the N-terminus, the 154-residue chain is Myoglobin (154 aa).

The Globin domain occupies 2–148; it reads GLSDGEWQLV…FRNDIAAKYK (147 aa). Position 4 is a phosphoserine (S4). H65 contributes to the nitrite binding site. H65 is an O2 binding site. Phosphothreonine is present on T68. H94 serves as a coordination point for heme b.

Belongs to the globin family. Monomeric.

Its subcellular location is the cytoplasm. The protein localises to the sarcoplasm. The enzyme catalyses Fe(III)-heme b-[protein] + nitric oxide + H2O = Fe(II)-heme b-[protein] + nitrite + 2 H(+). It carries out the reaction H2O2 + AH2 = A + 2 H2O. Monomeric heme protein which primary function is to store oxygen and facilitate its diffusion within muscle tissues. Reversibly binds oxygen through a pentacoordinated heme iron and enables its timely and efficient release as needed during periods of heightened demand. Depending on the oxidative conditions of tissues and cells, and in addition to its ability to bind oxygen, it also has a nitrite reductase activity whereby it regulates the production of bioactive nitric oxide. Under stress conditions, like hypoxia and anoxia, it also protects cells against reactive oxygen species thanks to its pseudoperoxidase activity. The polypeptide is Myoglobin (MB) (Meles meles (Eurasian badger)).